A 154-amino-acid chain; its full sequence is Fimbrial protein (154 aa).

A propeptide spans 1 to 6 (MNAQKG) (leader sequence). F7 carries the N-methylphenylalanine modification. The helical transmembrane segment at 7–29 (FTLIELMIVIAIIGILAAIALPA) threads the bilayer.

The protein belongs to the N-Me-Phe pilin family. The pili are polar flexible filaments of about 5.4 nanometers diameter and 2.5 micrometers average length; they consist of only a single polypeptide chain arranged in a helical configuration of five subunits per turn in the assembled pilus.

The protein resides in the fimbrium. Its subcellular location is the membrane. This is Fimbrial protein (tfpA) from Moraxella nonliquefaciens.